Consider the following 585-residue polypeptide: Protein NRT1/ PTR FAMILY 8.3 (585 aa).

Gly-2 is subject to N-acetylglycine. The helical transmembrane segment at 91–111 threads the bilayer; the sequence is WQGTCYLTPLIGAVLADAYWG. Phosphothreonine is present on Thr-115. 10 consecutive transmembrane segments (helical) span residues 116–136, 154–174, 200–220, 228–248, 351–371, 387–407, 431–451, 472–492, 511–531, and 556–576; these read IACF…SASV, PAQY…TGGI, FFNW…SLLV, WGLG…SFFF, FPIW…STMF, LPPA…VPLY, MGIG…VEII, VLWQ…YFIG, ALAL…LTLV, and FFWL…FSAA.

The protein belongs to the major facilitator superfamily. Proton-dependent oligopeptide transporter (POT/PTR) (TC 2.A.17) family. Highly expressed in young leaves, roots and germinating seeds, intermediately in stems, flowers and mature leaves and at low level in siliques.

It is found in the vacuole membrane. Its activity is regulated as follows. Inhibited by leucyl-ethionine. Peptide transporter. Mediates the transport of di- and tripeptides. High affinity, low capacity transporter. Can also transport histidine. The protein is Protein NRT1/ PTR FAMILY 8.3 (NPF8.3) of Arabidopsis thaliana (Mouse-ear cress).